The following is a 331-amino-acid chain: 6-phosphogluconolactonase (331 aa).

Residue Lys287 is modified to N6-acetyllysine.

It belongs to the cycloisomerase 2 family.

It catalyses the reaction 6-phospho-D-glucono-1,5-lactone + H2O = 6-phospho-D-gluconate + H(+). It participates in carbohydrate degradation; pentose phosphate pathway; D-ribulose 5-phosphate from D-glucose 6-phosphate (oxidative stage): step 2/3. In terms of biological role, catalyzes the hydrolysis of 6-phosphogluconolactone to 6-phosphogluconate. In Shigella sonnei (strain Ss046), this protein is 6-phosphogluconolactonase.